Reading from the N-terminus, the 245-residue chain is Transcriptional regulatory protein VxrB (245 aa).

The region spanning 31-142 (TLLLVEDDKN…ELFARIRAQL (112 aa)) is the Response regulatory domain. Asp78 carries the 4-aspartylphosphate modification. Positions 151-245 (DSKVVTSNLT…LRGVGYKMKA (95 aa)) form a DNA-binding region, ompR/PhoB-type.

In terms of processing, phosphorylated by VxrA.

Its subcellular location is the cytoplasm. Its function is as follows. Member of the two-component regulatory system VxrB/VxrA involved in the regulation of diverses processes, including virulence, the type VI secretion system (T6SS) and biofilm formation. VxrB positively regulates the expression of the T6SS, a virulence nanomachine that directly translocates effectors into bacterial or host cells, thereby facilitating colonization by competing with sister cells and intestinal microbiota. In addition, it activates vpsL expression and biofilm formation, and represses motility. May regulate biofilm formation via its regulation of key biofilm regulators and cyclic di-GMP levels. Significantly contributes to both attack and defense via T6SS, while also influencing competition via regulation of biofilm matrix production. Is critical for colonization in the infant mouse model. The protein is Transcriptional regulatory protein VxrB of Vibrio cholerae serotype O1 (strain ATCC 39315 / El Tor Inaba N16961).